Consider the following 1322-residue polypeptide: C-Jun-amino-terminal kinase-interacting protein 3 (1322 aa).

The RH1 domain occupies 12–100 (VVVYQDDYCS…LTQYEREKAL (89 aa)). A kinesin-binding domain (KBD); essential for its function in axon elongation region spans residues 50 to 80 (EVVKELMPLVVNVLENLDSVLSENQEHEVEL). Positions 66-167 (LDSVLSENQE…KKEYNALHQR (102 aa)) form a coiled coil. 2 disordered regions span residues 183–211 (KMQQ…SLNV) and 245–317 (SSSY…NSRN). Residues 210 to 226 (NVFPLADGMVRAQMGGK) form a JNK-binding domain (JBD); essential for its function in axon elongation region. A compositionally biased stretch (low complexity) spans 261-270 (SSAAATPSTT). Phosphothreonine occurs at positions 266, 276, and 287. Residues 271–282 (GTKSNTPTSSVP) are compositionally biased toward polar residues. Over residues 305 to 315 (NNKRAREKRNS) the composition is skewed to basic residues. Phosphoserine occurs at positions 315, 365, and 366. The segment at 424–459 (QLLETKNALNVVKNDLIAKVDQLSGEQEVLKGELEA) is leucine zipper-like domain (LZ); essential for its function in axon elongation. Positions 443–534 (VDQLSGEQEV…KERLMELQEA (92 aa)) form a coiled coil. The segment at 459-515 (AAKQAKVKLENRIKELEEELKRVKSEAVTARREPREEVEDDKIPMAQRRRFTRVEMA) is interaction with NTRK2. Positions 506 to 580 (RRRFTRVEMA…SPPPAKRSYP (75 aa)) constitute an RH2 domain. 2 positions are modified to phosphoserine: serine 588 and serine 662. Disordered stretches follow at residues 704 to 754 (WKPN…EADA), 844 to 952 (PRSN…TTSS), and 1281 to 1307 (RIGD…LSKA). Residues 724 to 750 (LTCDREGEGEPKSTHPSPEKKKAKEVP) show a composition bias toward basic and acidic residues. A compositionally biased stretch (polar residues) spans 914–937 (APTQSSSTQPASENGSESDGSIVQ). Low complexity predominate over residues 941 to 952 (EPSGESSATTSS). A compositionally biased stretch (acidic residues) spans 1285 to 1294 (GEDDETEEGT).

This sequence belongs to the JIP scaffold family. As to quaternary structure, forms homo- or heterooligomeric complexes. The central region of MAPK8IP3 interacts with the C-terminal of MAPK8IP2 but not MAPK8IP1. Binds specific components of the JNK signaling pathway namely MAPK8/JNK1, MAPK9/JNK2 and MAPK10/JNK3 to the N-terminal region, MAP2K4/MKK4 and MAP2K7/MKK7 to the central region and MAP3K11 to the C-terminal region. Binds the TPR motif-containing C-terminal of kinesin light chain, KLC1. Pre-assembled MAPK8IP1 scaffolding complexes are then transported as a cargo of kinesin, to the required subcellular location. Interacts with ROCK1 and this interaction is enhanced by ultraviolet-B (UVB) radiation. Interacts with SH3RF2. Interacts with NTRK3/TRKC. Interacts with NTRK2/TRKB. Phosphorylation by ROCK1 is crucial for the recruitment of JNK.

It localises to the cytoplasm. The protein resides in the golgi apparatus. It is found in the cytoplasmic vesicle. Its subcellular location is the cell projection. The protein localises to the growth cone. It localises to the axon. The protein resides in the dendrite. It is found in the perinuclear region. Its function is as follows. The JNK-interacting protein (JIP) group of scaffold proteins selectively mediates JNK signaling by aggregating specific components of the MAPK cascade to form a functional JNK signaling module. May function as a regulator of vesicle transport, through interactions with the JNK-signaling components and motor proteins. Promotes neuronal axon elongation in a kinesin- and JNK-dependent manner. Activates cofilin at axon tips via local activation of JNK, thereby regulating filopodial dynamics and enhancing axon elongation. Its binding to kinesin heavy chains (KHC), promotes kinesin-1 motility along microtubules and is essential for axon elongation and regeneration. Regulates cortical neuronal migration by mediating NTRK2/TRKB anterograde axonal transport during brain development. Acts as an adapter that bridges the interaction between NTRK2/TRKB and KLC1 and drives NTRK2/TRKB axonal but not dendritic anterograde transport, which is essential for subsequent BDNF-triggered signaling and filopodia formation. This is C-Jun-amino-terminal kinase-interacting protein 3 (Mapk8ip3) from Rattus norvegicus (Rat).